The chain runs to 129 residues: Histone H2A type 2-C (129 aa).

Residues 1–22 (MSGRGKQGGKARAKAKSRSSRA) are disordered. At Ser2 the chain carries N-acetylserine. A Phosphoserine; by RPS6KA5 modification is found at Ser2. A Citrulline; alternate modification is found at Arg4. Arg4 is modified (symmetric dimethylarginine; by PRMT5; alternate). N6-(2-hydroxyisobutyryl)lysine; alternate occurs at positions 6 and 10. At Lys6 the chain carries N6-acetyllysine; alternate. A compositionally biased stretch (basic residues) spans 7 to 19 (QGGKARAKAKSRS). Residue Lys10 is modified to N6-lactoyllysine; alternate. Lys10 carries the post-translational modification N6-succinyllysine; alternate. Residues Lys14 and Lys16 each participate in a glycyl lysine isopeptide (Lys-Gly) (interchain with G-Cter in ubiquitin) cross-link. Lys37 carries the post-translational modification N6-(2-hydroxyisobutyryl)lysine; alternate. An N6-(beta-hydroxybutyryl)lysine; alternate modification is found at Lys37. Lys37 carries the N6-crotonyllysine; alternate modification. 2 positions are modified to N6-(2-hydroxyisobutyryl)lysine: Lys75 and Lys76. Lys96 carries the N6-(2-hydroxyisobutyryl)lysine; alternate modification. Lys96 is subject to N6-succinyllysine; alternate. Lys96 carries the N6-glutaryllysine; alternate modification. Lys100 is modified (N6-glutaryllysine). Gln105 is subject to N5-methylglutamine. An N6-(2-hydroxyisobutyryl)lysine; alternate modification is found at Lys119. Lys119 and Lys120 each carry N6-crotonyllysine; alternate. N6-glutaryllysine; alternate is present on residues Lys119 and Lys120. Lys120 participates in a covalent cross-link: Glycyl lysine isopeptide (Lys-Gly) (interchain with G-Cter in ubiquitin); alternate. Position 121 is a phosphothreonine; by DCAF1 (Thr121). Phosphoserine is present on Ser123. Position 125 is an N6-crotonyllysine (Lys125).

It belongs to the histone H2A family. As to quaternary structure, the nucleosome is a histone octamer containing two molecules each of H2A, H2B, H3 and H4 assembled in one H3-H4 heterotetramer and two H2A-H2B heterodimers. The octamer wraps approximately 147 bp of DNA. Deiminated on Arg-4 in granulocytes upon calcium entry. In terms of processing, monoubiquitination of Lys-120 (H2AK119Ub) by RING1, TRIM37 and RNF2/RING2 complex gives a specific tag for epigenetic transcriptional repression and participates in X chromosome inactivation of female mammals. It is involved in the initiation of both imprinted and random X inactivation. Ubiquitinated H2A is enriched in inactive X chromosome chromatin. Ubiquitination of H2A functions downstream of methylation of 'Lys-27' of histone H3 (H3K27me). H2AK119Ub by RNF2/RING2 can also be induced by ultraviolet and may be involved in DNA repair. Following DNA double-strand breaks (DSBs), it is ubiquitinated through 'Lys-63' linkage of ubiquitin moieties by the E2 ligase UBE2N and the E3 ligases RNF8 and RNF168, leading to the recruitment of repair proteins to sites of DNA damage. Ubiquitination at Lys-14 and Lys-16 (H2AK13Ub and H2AK15Ub, respectively) in response to DNA damage is initiated by RNF168 that mediates monoubiquitination at these 2 sites, and 'Lys-63'-linked ubiquitin are then conjugated to monoubiquitin; RNF8 is able to extend 'Lys-63'-linked ubiquitin chains in vitro. H2AK119Ub and ionizing radiation-induced 'Lys-63'-linked ubiquitination (H2AK13Ub and H2AK15Ub) are distinct events. Post-translationally, phosphorylation on Ser-2 (H2AS1ph) is enhanced during mitosis. Phosphorylation on Ser-2 by RPS6KA5/MSK1 directly represses transcription. Acetylation of H3 inhibits Ser-2 phosphorylation by RPS6KA5/MSK1. Phosphorylation at Thr-121 (H2AT120ph) by DCAF1 is present in the regulatory region of many tumor suppresor genes and down-regulates their transcription. Symmetric dimethylation on Arg-4 by the PRDM1/PRMT5 complex may play a crucial role in the germ-cell lineage. In terms of processing, glutamine methylation at Gln-105 (H2AQ104me) by FBL is specifically dedicated to polymerase I. It is present at 35S ribosomal DNA locus and impairs binding of the FACT complex. Post-translationally, crotonylation (Kcr) is specifically present in male germ cells and marks testis-specific genes in post-meiotic cells, including X-linked genes that escape sex chromosome inactivation in haploid cells. Crotonylation marks active promoters and enhancers and confers resistance to transcriptional repressors. It is also associated with post-meiotically activated genes on autosomes. Lactylated in macrophages by EP300/P300 by using lactoyl-CoA directly derived from endogenous or exogenous lactate, leading to stimulates gene transcription.

The protein resides in the nucleus. Its subcellular location is the chromosome. In terms of biological role, core component of nucleosome. Nucleosomes wrap and compact DNA into chromatin, limiting DNA accessibility to the cellular machineries which require DNA as a template. Histones thereby play a central role in transcription regulation, DNA repair, DNA replication and chromosomal stability. DNA accessibility is regulated via a complex set of post-translational modifications of histones, also called histone code, and nucleosome remodeling. The sequence is that of Histone H2A type 2-C from Bos taurus (Bovine).